The following is a 599-amino-acid chain: Sulfite reductase [NADPH] flavoprotein alpha-component (599 aa).

The Flavodoxin-like domain maps to 64-202 (ITLISASQTG…AAAEWRARVV (139 aa)). Residues 70–75 (SQTGNA), 117–120 (STQG), and 153–162 (LGDTSYEFFC) contribute to the FMN site. The region spanning 234 to 448 (EAPLTATLSV…IEHNDNFRLP (215 aa)) is the FAD-binding FR-type domain. FAD is bound by residues Thr-322, Ala-356, 386–389 (RLYS), 404–406 (TVG), Tyr-410, and 419–422 (GGAS). Residues 519-520 (SR), 525-529 (KIYVQ), and Asp-561 contribute to the NADP(+) site. Tyr-599 serves as a coordination point for FAD.

This sequence belongs to the NADPH-dependent sulphite reductase flavoprotein subunit CysJ family. In the N-terminal section; belongs to the flavodoxin family. It in the C-terminal section; belongs to the flavoprotein pyridine nucleotide cytochrome reductase family. In terms of assembly, alpha(8)-beta(8). The alpha component is a flavoprotein, the beta component is a hemoprotein. It depends on FAD as a cofactor. FMN serves as cofactor.

The catalysed reaction is hydrogen sulfide + 3 NADP(+) + 3 H2O = sulfite + 3 NADPH + 4 H(+). It functions in the pathway sulfur metabolism; hydrogen sulfide biosynthesis; hydrogen sulfide from sulfite (NADPH route): step 1/1. Its function is as follows. Component of the sulfite reductase complex that catalyzes the 6-electron reduction of sulfite to sulfide. This is one of several activities required for the biosynthesis of L-cysteine from sulfate. The flavoprotein component catalyzes the electron flow from NADPH -&gt; FAD -&gt; FMN to the hemoprotein component. The polypeptide is Sulfite reductase [NADPH] flavoprotein alpha-component (Klebsiella pneumoniae subsp. pneumoniae (strain ATCC 700721 / MGH 78578)).